The chain runs to 719 residues: Protein borderless (719 aa).

Residues 1-33 form the signal peptide; it reads MPAKRSRTFRQSGSALLALLAIILLMNISCTSA. Residues 34–650 lie on the Extracellular side of the membrane; the sequence is ARDHRRQTNL…IDVPSQRKVR (617 aa). Ig-like domains follow at residues 40-128, 134-241, 246-334, and 341-429; these read QTNL…CQVS, PSVR…AFLN, AKVI…PVIS, and PIFS…AELM. 4 disulfide bridges follow: Cys55–Cys125, Cys172–Cys224, Cys267–Cys318, and Cys363–Cys413. Fibronectin type-III domains are found at residues 434-527 and 555-646; these read APRA…TLPS and APWN…VPSQ. A helical transmembrane segment spans residues 651–671; that stretch reads ALIIGSSVGVIFLLCALCAFL. The Cytoplasmic portion of the chain corresponds to 672-719; it reads YVKRSCLRHLFAKDSSASEDEDTAESGDCDSDEQDQRDRDSIKIRQST. Residues 685–719 form a disordered region; sequence DSSASEDEDTAESGDCDSDEQDQRDRDSIKIRQST. The segment covering 688 to 704 has biased composition (acidic residues); that stretch reads ASEDEDTAESGDCDSDE. The span at 705 to 719 shows a compositional bias: basic and acidic residues; it reads QDQRDRDSIKIRQST.

This sequence belongs to the immunoglobulin superfamily. As to quaternary structure, interacts with tutl. In terms of tissue distribution, in the visual system, expressed in lamina and medulla (at protein level).

It localises to the cell membrane. It is found in the cell projection. The protein localises to the axon. In the developing eye, has a role in axonal targeting of the R7 photoreceptor where it functions together with tutl. Probably mediates homotypic cell adhesion; the effect is inhibited by Lar. This Drosophila melanogaster (Fruit fly) protein is Protein borderless.